Reading from the N-terminus, the 457-residue chain is uncharacterized protein (457 aa).

The next 14 helical transmembrane spans lie at Tyr15–Ala35, Ile54–Leu74, Gly87–Leu107, Val112–Ile132, Ile144–Leu164, Ile166–Leu186, Leu205–Phe225, Gln229–Ile249, Leu269–Val289, Leu308–Ile328, Gly334–Leu354, Ser357–Phe377, Met400–Leu420, and Thr428–Leu448.

The protein belongs to the major facilitator superfamily. TCR/Tet family.

It is found in the cell inner membrane. This is an uncharacterized protein from Escherichia coli (strain K12).